Here is a 1696-residue protein sequence, read N- to C-terminus: E3 ubiquitin-protein ligase listerin (1696 aa).

17 HEAT repeats span residues 17–55 (RGVLPYWPRIYCKISLDLDRRVREATQQAFEQLILKVKK), 102–140 (FCKEEIMNVLLDHLLKETPDTLSDTQAVPIEDRESKYFR), 144–181 (CSLLALKRLLCMLPRSENSSLQERLAHLLSQSKFWKYS), 209–250 (AEAS…CWEH), 252–289 (NAQKGVLPKLWSVLREGGRGLATVIFPNLLPFISRVPT), 354–394 (LISD…KAES), 431–468 (EKNLAGVSGLLQVLQNPNCLLKVNKKKKAKIRFKGEGD), 542–580 (FPSIRVFQVLLQQSSEEDPKNLNSPDHDVTPRHKNPAVQ), 596–634 (EESDFLVDILYSVLFCCTDSSERKHLLDDMTKMNFKWSV), 921–958 (LCTASLLSKMALRLLEKEKSLKEEEIGVKINITVAEML), 992–1029 (MDLSVHLPGLLELLYNRSKEDGSLWSLTANRFIHKRGA), 1108–1148 (DLCQ…LIGL), 1150–1188 (VEMIRFLSILLKYLASSVSSLVDVDWDFIMCSMLAWLES), 1245–1282 (GIYSLMLPMLVRIAEEYKASETSHMSHVLKSLGRTLGY), 1307–1344 (DSLQSLLNTLAPLLLYRERSVQITVYHLLDKIMADLPG), 1371–1405 (VLAIQEDLVESILKEIPVGEFAVIEPLKEEFCFVL), and 1406–1442 (GYLLTWKLILTFFKAASSQLRALYSQYLRKTKSLNKL). The RING-type zinc finger occupies 1645–1692 (CMICFSVIHGSNYSLPKKACRTCKKKFHSECLYKWFTSSNKSTCPLCR).

This sequence belongs to the LTN1 family. In terms of assembly, component of the ribosome quality control complex (RQC), composed of at least the E3 ubiquitin ligase LTN1 and NEMF associated with the 60S ribosomal subunit. The complex probably also contains TCF25 as well as VCP/p97 and its ubiquitin-binding cofactors.

Its subcellular location is the cytoplasm. It is found in the cytosol. It carries out the reaction S-ubiquitinyl-[E2 ubiquitin-conjugating enzyme]-L-cysteine + [acceptor protein]-L-lysine = [E2 ubiquitin-conjugating enzyme]-L-cysteine + N(6)-ubiquitinyl-[acceptor protein]-L-lysine.. Its pathway is protein modification; protein ubiquitination. E3 ubiquitin-protein ligase component of the ribosome quality control complex (RQC), a ribosome-associated complex that mediates ubiquitination and extraction of incompletely synthesized nascent chains for proteasomal degradation. Within the RQC complex, LTN1 is recruited to stalled 60S ribosomal subunits by NEMF and mediates ubiquitination of stalled nascent chains. Ubiquitination leads to VCP/p97 recruitment for extraction and degradation of the incomplete translation product. This chain is E3 ubiquitin-protein ligase listerin (ltn1), found in Xenopus tropicalis (Western clawed frog).